A 206-amino-acid polypeptide reads, in one-letter code: Putative 3-methyladenine DNA glycosylase (206 aa).

This sequence belongs to the DNA glycosylase MPG family.

The sequence is that of Putative 3-methyladenine DNA glycosylase from Rhodopseudomonas palustris (strain ATCC BAA-98 / CGA009).